Consider the following 364-residue polypeptide: Histidinol-phosphate aminotransferase (364 aa).

Lysine 226 carries the post-translational modification N6-(pyridoxal phosphate)lysine.

It belongs to the class-II pyridoxal-phosphate-dependent aminotransferase family. Histidinol-phosphate aminotransferase subfamily. As to quaternary structure, homodimer. It depends on pyridoxal 5'-phosphate as a cofactor.

It catalyses the reaction L-histidinol phosphate + 2-oxoglutarate = 3-(imidazol-4-yl)-2-oxopropyl phosphate + L-glutamate. The protein operates within amino-acid biosynthesis; L-histidine biosynthesis; L-histidine from 5-phospho-alpha-D-ribose 1-diphosphate: step 7/9. The sequence is that of Histidinol-phosphate aminotransferase from Campylobacter jejuni subsp. jejuni serotype O:23/36 (strain 81-176).